We begin with the raw amino-acid sequence, 491 residues long: Protein DETOXIFICATION 28 (491 aa).

12 helical membrane-spanning segments follow: residues 47–67 (IVGP…ITQA), 77–97 (LAAI…LFIG), 127–147 (IVLF…TPIL), 160–180 (SGII…FFPI), 192–212 (VIAI…WLFV), 228–248 (VSWW…GCPL), 272–292 (GIMV…TGNL), 302–322 (MSIC…FFAG), 352–372 (IIGI…GWMF), 387–407 (ILLS…GVAV), 414–434 (LVAF…GIVM), and 444–464 (GIWA…LIFI).

Belongs to the multi antimicrobial extrusion (MATE) (TC 2.A.66.1) family.

It is found in the membrane. This chain is Protein DETOXIFICATION 28, found in Arabidopsis thaliana (Mouse-ear cress).